A 421-amino-acid chain; its full sequence is MLDPSLLRSSPETVAAGLARRHFTLDVAALNALDQQRKALQIQLEQLRNARNEASRQIGQARRQGLDTGAMQAAAASNGEEIKTLEQSLERTLAEWDTLTIGLPNIPQDSVPDGRDEADNVVLRHWGSPSTFAFPPRDHVELGEALGIIDFAAGARLAGTRFVVLRGAGARLERALTQFMLDLHTTEHGYTEIAPPFLANADSLYGTGQLPKFEEDLFALRDDPYYLIPTAEVPLTNLLRGEIVASLPQRFCAYTPCFRREAGAYGRDTRGMIRQHQFDKVELVQIVRPEDSAQAHETLTAHAEKVLQLLELPYRVTALCAGDLGFSAAKTYDLEVWLPGQNQYREISSCSNFESFQARRLQLRYRAEDGKPQLVHTLNGSGLAVGRTLVALLENHQQADGRIRIPAALRPYLGGMTVIQA.

230 to 232 (TAE) contributes to the L-serine binding site. Residue 259 to 261 (RRE) coordinates ATP. Glu-282 is a binding site for L-serine. 346–349 (EISS) lines the ATP pocket. Ser-381 provides a ligand contact to L-serine.

The protein belongs to the class-II aminoacyl-tRNA synthetase family. Type-1 seryl-tRNA synthetase subfamily. Homodimer. The tRNA molecule binds across the dimer.

The protein localises to the cytoplasm. The enzyme catalyses tRNA(Ser) + L-serine + ATP = L-seryl-tRNA(Ser) + AMP + diphosphate + H(+). It catalyses the reaction tRNA(Sec) + L-serine + ATP = L-seryl-tRNA(Sec) + AMP + diphosphate + H(+). The protein operates within aminoacyl-tRNA biosynthesis; selenocysteinyl-tRNA(Sec) biosynthesis; L-seryl-tRNA(Sec) from L-serine and tRNA(Sec): step 1/1. Functionally, catalyzes the attachment of serine to tRNA(Ser). Is also able to aminoacylate tRNA(Sec) with serine, to form the misacylated tRNA L-seryl-tRNA(Sec), which will be further converted into selenocysteinyl-tRNA(Sec). This chain is Serine--tRNA ligase, found in Acidithiobacillus ferrooxidans (strain ATCC 23270 / DSM 14882 / CIP 104768 / NCIMB 8455) (Ferrobacillus ferrooxidans (strain ATCC 23270)).